Reading from the N-terminus, the 467-residue chain is Pachytene checkpoint protein 2 homolog (467 aa).

209–216 contacts ATP; the sequence is GPPGTGKT.

This sequence belongs to the AAA ATPase family. PCH2 subfamily.

The protein resides in the chromosome. Plays a key role in chromosome recombination during meiosis. Mediates meiotic chromosome remodeling and crossover maturation. This Arabidopsis thaliana (Mouse-ear cress) protein is Pachytene checkpoint protein 2 homolog.